A 1045-amino-acid polypeptide reads, in one-letter code: Elongation factor 3 (1045 aa).

HEAT repeat units follow at residues 5 to 42 (DQSL…GNII), 43 to 85 (EHDI…PSVE), 86 to 123 (PFVI…AINP), 125 to 162 (AIKA…AAKE), 166 to 203 (LRMP…TVDN), 205 to 241 (DIER…EVTP), and 242 to 279 (ATLS…LVED). Positions 42, 44, and 83 each coordinate ADP. ADP-binding residues include Thr392, His396, and Glu397. 2 ABC transporter domains span residues 426–641 (DEGE…YYEL) and 667–993 (VKVS…KKED). Positions 703, 922, 925, and 951 each coordinate ADP. Residues 974–1045 (SGHNWVSGQG…AYVSSDDEDF (72 aa)) form a disordered region. The segment covering 1007 to 1031 (GGKKKKKLSSAELRKKKKERMKKKK) has biased composition (basic residues).

It belongs to the ABC transporter superfamily. ABCF family. EF3 subfamily. In terms of assembly, monomer.

The protein resides in the cytoplasm. It localises to the cytosol. The enzyme catalyses ATP + H2O = ADP + phosphate + H(+). Its pathway is protein biosynthesis; polypeptide chain elongation. Ribosome-dependent ATPase that functions in cytoplasmic translation elongation. Required for the ATP-dependent release of deacylated tRNA from the ribosomal E-site during protein biosynthesis. Stimulates the eEF1A-dependent binding of aminoacyl-tRNA to the ribosomal A-site, which has reduced affinity for tRNA as long as the E-site is occupied. Assists translation termination by stimulating the release of nascent protein from the ribosome by release factors. In Candida glabrata (strain ATCC 2001 / BCRC 20586 / JCM 3761 / NBRC 0622 / NRRL Y-65 / CBS 138) (Yeast), this protein is Elongation factor 3 (TEF3).